We begin with the raw amino-acid sequence, 350 residues long: Protein disulfide isomerase Creld2 (350 aa).

Positions 1–22 are cleaved as a signal peptide; that stretch reads MHLLLAAAFGLLLLLPPPGAVA. Residues 29-32 carry the CXXC motif; the sequence is CQRC. Disulfide bonds link cysteine 29–cysteine 32, cysteine 138–cysteine 152, cysteine 146–cysteine 164, and cysteine 166–cysteine 175. The EGF-like 1 domain maps to 134–176; it reads DCQECQGGSERPCSGNGYCSGDGSRQGDGSCQCHTGYKGPLCI. Residues 191 to 238 form an FU 1 repeat; sequence HSICSACDESCKTCSGPSNKDCIQCEVGWARVEDACVDVDECAAETSP. N-linked (GlcNAc...) asparagine glycosylation is present at asparagine 249. The FU 2 repeat unit spans residues 251-298; it reads SYTCEDCDSTCVGCTGKGPANCKECIAGYTKESGQCTDIDECSLEEKA. Residues 261 to 264 carry the CXXC motif; the sequence is CVGC. 4 cysteine pairs are disulfide-bonded: cysteine 261–cysteine 264, cysteine 292–cysteine 306, cysteine 299–cysteine 315, and cysteine 317–cysteine 328. The EGF-like 2; calcium-binding domain maps to 288–329; that stretch reads DIDECSLEEKACKRKNENCYNVPGSFVCVCPEGFEETEDACV.

This sequence belongs to the CRELD family. As to quaternary structure, interacts with CHRNA4. Component of a complex containing at least CRELD2, MANF, MATN3 and PDIA4. Expressed in chondrocytes (at protein level).

The protein localises to the endoplasmic reticulum. The enzyme catalyses Catalyzes the rearrangement of -S-S- bonds in proteins.. Protein disulfide isomerase. Might play a role in the unfolded protein response. May regulate transport of alpha4-beta2 neuronal acetylcholine receptor. The chain is Protein disulfide isomerase Creld2 (Creld2) from Mus musculus (Mouse).